The chain runs to 89 residues: Small ribosomal subunit protein uS15 (89 aa).

This sequence belongs to the universal ribosomal protein uS15 family. In terms of assembly, part of the 30S ribosomal subunit. Forms a bridge to the 50S subunit in the 70S ribosome, contacting the 23S rRNA.

In terms of biological role, one of the primary rRNA binding proteins, it binds directly to 16S rRNA where it helps nucleate assembly of the platform of the 30S subunit by binding and bridging several RNA helices of the 16S rRNA. Its function is as follows. Forms an intersubunit bridge (bridge B4) with the 23S rRNA of the 50S subunit in the ribosome. The protein is Small ribosomal subunit protein uS15 of Nitrosococcus oceani (strain ATCC 19707 / BCRC 17464 / JCM 30415 / NCIMB 11848 / C-107).